We begin with the raw amino-acid sequence, 116 residues long: MDKKTSRLRRALRARKKIQELGVNRLVVHRTPRHTYAQVISPENVVLAAASTAEKAVTEQLKYTGNVDAAKVVGKTVAERAIEKGVAVVAFDRSGFKYHGRVAALADAAREAGLKF.

It belongs to the universal ribosomal protein uL18 family. Part of the 50S ribosomal subunit; part of the 5S rRNA/L5/L18/L25 subcomplex. Contacts the 5S and 23S rRNAs.

In terms of biological role, this is one of the proteins that bind and probably mediate the attachment of the 5S RNA into the large ribosomal subunit, where it forms part of the central protuberance. This Shewanella halifaxensis (strain HAW-EB4) protein is Large ribosomal subunit protein uL18.